The following is a 251-amino-acid chain: Probable transcriptional regulatory protein cgR_1708 (251 aa).

Positions 1–22 (MAGHSKWATTKHKKAANDAKRG) are disordered.

It belongs to the TACO1 family.

It localises to the cytoplasm. In Corynebacterium glutamicum (strain R), this protein is Probable transcriptional regulatory protein cgR_1708.